Consider the following 261-residue polypeptide: GTP cyclohydrolase FolE2 (261 aa).

This sequence belongs to the GTP cyclohydrolase IV family.

The catalysed reaction is GTP + H2O = 7,8-dihydroneopterin 3'-triphosphate + formate + H(+). It participates in cofactor biosynthesis; 7,8-dihydroneopterin triphosphate biosynthesis; 7,8-dihydroneopterin triphosphate from GTP: step 1/1. In terms of biological role, converts GTP to 7,8-dihydroneopterin triphosphate. The polypeptide is GTP cyclohydrolase FolE2 (Herminiimonas arsenicoxydans).